A 339-amino-acid polypeptide reads, in one-letter code: Phenylalanine--tRNA ligase alpha subunit (339 aa).

Glutamate 254 is a Mg(2+) binding site.

The protein belongs to the class-II aminoacyl-tRNA synthetase family. Phe-tRNA synthetase alpha subunit type 1 subfamily. As to quaternary structure, tetramer of two alpha and two beta subunits. The cofactor is Mg(2+).

The protein resides in the cytoplasm. It carries out the reaction tRNA(Phe) + L-phenylalanine + ATP = L-phenylalanyl-tRNA(Phe) + AMP + diphosphate + H(+). This is Phenylalanine--tRNA ligase alpha subunit from Clostridium tetani (strain Massachusetts / E88).